Consider the following 441-residue polypeptide: Ribosomal protein uS12 methylthiotransferase RimO (441 aa).

Residues 8–118 form the MTTase N-terminal domain; the sequence is PKIGFVSLGC…VLQHVHHYVP (111 aa). [4Fe-4S] cluster-binding residues include cysteine 17, cysteine 53, cysteine 82, cysteine 150, cysteine 154, and cysteine 157. The Radical SAM core domain occupies 136 to 373; that stretch reads LTPRHYAYLK…MQLQQQISAE (238 aa). In terms of domain architecture, TRAM spans 376–441; it reads QEKVGREILV…DEYDLWGSRV (66 aa).

This sequence belongs to the methylthiotransferase family. RimO subfamily. Requires [4Fe-4S] cluster as cofactor.

The protein localises to the cytoplasm. It carries out the reaction L-aspartate(89)-[ribosomal protein uS12]-hydrogen + (sulfur carrier)-SH + AH2 + 2 S-adenosyl-L-methionine = 3-methylsulfanyl-L-aspartate(89)-[ribosomal protein uS12]-hydrogen + (sulfur carrier)-H + 5'-deoxyadenosine + L-methionine + A + S-adenosyl-L-homocysteine + 2 H(+). Catalyzes the methylthiolation of an aspartic acid residue of ribosomal protein uS12. This chain is Ribosomal protein uS12 methylthiotransferase RimO, found in Salmonella arizonae (strain ATCC BAA-731 / CDC346-86 / RSK2980).